Reading from the N-terminus, the 329-residue chain is Lipoyl synthase (329 aa).

Residues Cys-72, Cys-77, Cys-83, Cys-98, Cys-102, Cys-105, and Ser-313 each coordinate [4Fe-4S] cluster. The region spanning Cys-83 to Glu-303 is the Radical SAM core domain.

This sequence belongs to the radical SAM superfamily. Lipoyl synthase family. [4Fe-4S] cluster serves as cofactor.

The protein localises to the cytoplasm. It catalyses the reaction [[Fe-S] cluster scaffold protein carrying a second [4Fe-4S](2+) cluster] + N(6)-octanoyl-L-lysyl-[protein] + 2 oxidized [2Fe-2S]-[ferredoxin] + 2 S-adenosyl-L-methionine + 4 H(+) = [[Fe-S] cluster scaffold protein] + N(6)-[(R)-dihydrolipoyl]-L-lysyl-[protein] + 4 Fe(3+) + 2 hydrogen sulfide + 2 5'-deoxyadenosine + 2 L-methionine + 2 reduced [2Fe-2S]-[ferredoxin]. Its pathway is protein modification; protein lipoylation via endogenous pathway; protein N(6)-(lipoyl)lysine from octanoyl-[acyl-carrier-protein]: step 2/2. In terms of biological role, catalyzes the radical-mediated insertion of two sulfur atoms into the C-6 and C-8 positions of the octanoyl moiety bound to the lipoyl domains of lipoate-dependent enzymes, thereby converting the octanoylated domains into lipoylated derivatives. This chain is Lipoyl synthase, found in Legionella pneumophila (strain Corby).